The following is a 396-amino-acid chain: MAKEKFERKKPHVNVGTIGHVDHGKTTLTAAITTIMAKKYGGTAKAYDQIDAAPEERERGITISTAHVEYESASRHYAHVDCPGHADYVKNMITGAAQMDGAILVVSAADGPMPQTREHILLSRQVGVPYIVVFMNKADMVDDPELLELVEMEVRDLLSSYDFPGDDIPIVVGSALKALEGEDSDIGVKAIEKLVETMDSYIPEPVRNIDKPFLLPIEDVFSISGRGTVVTGRVESGIVKVGEEVEIVGIRDTQKTTCTGVEMFRKLLDEGRAGDNVGVLLRGTKRDEVERGQVLAKPGTIKPHTKFEAEVYVLSKEEGGRHTPFFNGYRPQFYFRTTDVTGTCDLPSGVEMVMPGDNVQLVVSLHAPIAMDEGLRFAIREGGRTVGAGVVAKIIE.

The tr-type G domain occupies 10–206; that stretch reads KPHVNVGTIG…TMDSYIPEPV (197 aa). The G1 stretch occupies residues 19–26; it reads GHVDHGKT. GTP is bound at residue 19-26; it reads GHVDHGKT. Thr-26 provides a ligand contact to Mg(2+). Residues 60–64 are G2; the sequence is GITIS. Positions 81-84 are G3; it reads DCPG. GTP is bound by residues 81 to 85 and 136 to 139; these read DCPGH and NKAD. The tract at residues 136–139 is G4; it reads NKAD. Positions 174-176 are G5; sequence SAL.

This sequence belongs to the TRAFAC class translation factor GTPase superfamily. Classic translation factor GTPase family. EF-Tu/EF-1A subfamily. In terms of assembly, monomer.

It is found in the cytoplasm. It catalyses the reaction GTP + H2O = GDP + phosphate + H(+). Its function is as follows. GTP hydrolase that promotes the GTP-dependent binding of aminoacyl-tRNA to the A-site of ribosomes during protein biosynthesis. The protein is Elongation factor Tu of Legionella pneumophila (strain Paris).